The following is a 284-amino-acid chain: Nucleoid occlusion protein (284 aa).

Residues 143–162 (EALAQRVGKSQSAIANKMRL) constitute a DNA-binding region (H-T-H motif).

This sequence belongs to the ParB family.

Its subcellular location is the cytoplasm. The protein localises to the nucleoid. Functionally, effects nucleoid occlusion by binding relatively nonspecifically to DNA and preventing the assembly of the division machinery in the vicinity of the nucleoid, especially under conditions that disturb the cell cycle. It helps to coordinate cell division and chromosome segregation by preventing the formation of the Z ring through the nucleoid, which would cause chromosome breakage. In Listeria monocytogenes serotype 4b (strain CLIP80459), this protein is Nucleoid occlusion protein.